Here is a 437-residue protein sequence, read N- to C-terminus: tRNA-2-methylthio-N(6)-dimethylallyladenosine synthase (437 aa).

The MTTase N-terminal domain maps to 1–115; it reads MKVYIETMGC…ISQVIHKEKA (115 aa). Cys-10, Cys-46, Cys-78, Cys-148, Cys-152, and Cys-155 together coordinate [4Fe-4S] cluster. The Radical SAM core domain maps to 134–367; it reads KKAQIRSLLN…QNRHKEILEE (234 aa). The region spanning 370 to 436 is the TRAM domain; that stretch reads KLEVGKTHVV…KGRLMATTKG (67 aa).

It belongs to the methylthiotransferase family. MiaB subfamily. In terms of assembly, monomer. The cofactor is [4Fe-4S] cluster.

The protein localises to the cytoplasm. It carries out the reaction N(6)-dimethylallyladenosine(37) in tRNA + (sulfur carrier)-SH + AH2 + 2 S-adenosyl-L-methionine = 2-methylsulfanyl-N(6)-dimethylallyladenosine(37) in tRNA + (sulfur carrier)-H + 5'-deoxyadenosine + L-methionine + A + S-adenosyl-L-homocysteine + 2 H(+). Functionally, catalyzes the methylthiolation of N6-(dimethylallyl)adenosine (i(6)A), leading to the formation of 2-methylthio-N6-(dimethylallyl)adenosine (ms(2)i(6)A) at position 37 in tRNAs that read codons beginning with uridine. This Helicobacter pylori (strain J99 / ATCC 700824) (Campylobacter pylori J99) protein is tRNA-2-methylthio-N(6)-dimethylallyladenosine synthase.